Reading from the N-terminus, the 497-residue chain is Serine hydroxymethyltransferase (497 aa).

Residues Leu-176 and 180–182 (GHL) each bind (6S)-5,6,7,8-tetrahydrofolate. Position 289 is an N6-(pyridoxal phosphate)lysine (Lys-289).

The protein belongs to the SHMT family. Homodimer. The cofactor is pyridoxal 5'-phosphate.

The protein resides in the cytoplasm. The enzyme catalyses (6R)-5,10-methylene-5,6,7,8-tetrahydrofolate + glycine + H2O = (6S)-5,6,7,8-tetrahydrofolate + L-serine. It functions in the pathway one-carbon metabolism; tetrahydrofolate interconversion. It participates in amino-acid biosynthesis; glycine biosynthesis; glycine from L-serine: step 1/1. Catalyzes the reversible interconversion of serine and glycine with tetrahydrofolate (THF) serving as the one-carbon carrier. This reaction serves as the major source of one-carbon groups required for the biosynthesis of purines, thymidylate, methionine, and other important biomolecules. Also exhibits THF-independent aldolase activity toward beta-hydroxyamino acids, producing glycine and aldehydes, via a retro-aldol mechanism. In Chlamydia trachomatis serovar A (strain ATCC VR-571B / DSM 19440 / HAR-13), this protein is Serine hydroxymethyltransferase.